Consider the following 361-residue polypeptide: Biotin synthase (361 aa).

The disordered stretch occupies residues 14–38 (AQRTPEPLPPTSQGLARPSHDVVRG). Residues 86 to 315 (HKGGPAALCG…ARDILVCGGR (230 aa)) enclose the Radical SAM core domain. [4Fe-4S] cluster is bound by residues Cys104, Cys108, and Cys111. [2Fe-2S] cluster-binding residues include Cys180 and Cys240.

The protein belongs to the radical SAM superfamily. Biotin synthase family. In terms of assembly, homodimer. The cofactor is [4Fe-4S] cluster. [2Fe-2S] cluster serves as cofactor.

It carries out the reaction (4R,5S)-dethiobiotin + (sulfur carrier)-SH + 2 reduced [2Fe-2S]-[ferredoxin] + 2 S-adenosyl-L-methionine = (sulfur carrier)-H + biotin + 2 5'-deoxyadenosine + 2 L-methionine + 2 oxidized [2Fe-2S]-[ferredoxin]. It functions in the pathway cofactor biosynthesis; biotin biosynthesis; biotin from 7,8-diaminononanoate: step 2/2. Functionally, catalyzes the conversion of dethiobiotin (DTB) to biotin by the insertion of a sulfur atom into dethiobiotin via a radical-based mechanism. This Nitratidesulfovibrio vulgaris (strain DP4) (Desulfovibrio vulgaris) protein is Biotin synthase.